The following is a 250-amino-acid chain: Small ribosomal subunit protein uS2 (250 aa).

Residues 225 to 250 (GAQGGRQARGEDLGAAVEAPSEDALA) form a disordered region.

The protein belongs to the universal ribosomal protein uS2 family.

The chain is Small ribosomal subunit protein uS2 from Rhizorhabdus wittichii (strain DSM 6014 / CCUG 31198 / JCM 15750 / NBRC 105917 / EY 4224 / RW1) (Sphingomonas wittichii).